The sequence spans 317 residues: ADP-L-glycero-D-manno-heptose-6-epimerase (317 aa).

NADP(+) contacts are provided by residues phenylalanine 10–isoleucine 11, aspartate 31–aspartate 32, glutamine 38, lysine 53, glutamine 75–serine 79, and asparagine 92. Tyrosine 139 functions as the Proton acceptor in the catalytic mechanism. Residue lysine 143 participates in NADP(+) binding. Asparagine 166 contributes to the substrate binding site. Valine 167 and lysine 175 together coordinate NADP(+). Lysine 175 serves as the catalytic Proton acceptor. Substrate contacts are provided by residues glycine 177, histidine 184, phenylalanine 198–valine 201, arginine 211, and tyrosine 275.

Belongs to the NAD(P)-dependent epimerase/dehydratase family. HldD subfamily. As to quaternary structure, homopentamer. It depends on NADP(+) as a cofactor.

It catalyses the reaction ADP-D-glycero-beta-D-manno-heptose = ADP-L-glycero-beta-D-manno-heptose. It participates in nucleotide-sugar biosynthesis; ADP-L-glycero-beta-D-manno-heptose biosynthesis; ADP-L-glycero-beta-D-manno-heptose from D-glycero-beta-D-manno-heptose 7-phosphate: step 4/4. Its function is as follows. Catalyzes the interconversion between ADP-D-glycero-beta-D-manno-heptose and ADP-L-glycero-beta-D-manno-heptose via an epimerization at carbon 6 of the heptose. This is ADP-L-glycero-D-manno-heptose-6-epimerase from Shewanella frigidimarina (strain NCIMB 400).